We begin with the raw amino-acid sequence, 456 residues long: Methylenetetrahydrofolate--tRNA-(uracil-5-)-methyltransferase TrmFO (456 aa).

An FAD-binding site is contributed by 12–17 (GGGLAG).

Belongs to the MnmG family. TrmFO subfamily. FAD is required as a cofactor.

Its subcellular location is the cytoplasm. It carries out the reaction uridine(54) in tRNA + (6R)-5,10-methylene-5,6,7,8-tetrahydrofolate + NADH + H(+) = 5-methyluridine(54) in tRNA + (6S)-5,6,7,8-tetrahydrofolate + NAD(+). The catalysed reaction is uridine(54) in tRNA + (6R)-5,10-methylene-5,6,7,8-tetrahydrofolate + NADPH + H(+) = 5-methyluridine(54) in tRNA + (6S)-5,6,7,8-tetrahydrofolate + NADP(+). In terms of biological role, catalyzes the folate-dependent formation of 5-methyl-uridine at position 54 (M-5-U54) in all tRNAs. The protein is Methylenetetrahydrofolate--tRNA-(uracil-5-)-methyltransferase TrmFO of Picosynechococcus sp. (strain ATCC 27264 / PCC 7002 / PR-6) (Agmenellum quadruplicatum).